Consider the following 388-residue polypeptide: MNLHEYQAKQLFAEFGLPVPEGYACDTPQEAFEAAGRISTAKKVVKCQVHAGGRGKAGGVELHDTKEGVKEFAQKWLGKNLVTYQTDANGQPVTKILVEEASNIANELYLGAVVDRATRKVVFMASTEGGVEIEKVAEETPELIHKAAIDPLVGPQAYQGRELAFKLGLQGDQIKQFVKIFMGLGEMFTQYDLALLEINPLVITGEGNLLCLDGKINIDSNALYRQPKLREMHDPSQEDKREAHAAQWELNYVALDGNVGCMVNGAGLAMGTMDIVNLHGGKPANFLDVGGGATKERVAEAFKIILSDDNVKAVLVNIFGGIVRCDMIAEGIIGAVKEVGVSVPVVVRLEGTNADLGRKVLAESGLDIIAAESLTDAAQKVVAAAEGK.

Residues 9–244 enclose the ATP-grasp domain; the sequence is KQLFAEFGLP…PSQEDKREAH (236 aa). ATP-binding positions include Lys46, 53 to 55, Glu99, Ser102, and Glu107; that span reads GRG. Mg(2+)-binding residues include Asn199 and Asp213. Substrate-binding positions include Asn264 and 321-323; that span reads GIV.

Belongs to the succinate/malate CoA ligase beta subunit family. As to quaternary structure, heterotetramer of two alpha and two beta subunits. Requires Mg(2+) as cofactor.

It catalyses the reaction succinate + ATP + CoA = succinyl-CoA + ADP + phosphate. It carries out the reaction GTP + succinate + CoA = succinyl-CoA + GDP + phosphate. It functions in the pathway carbohydrate metabolism; tricarboxylic acid cycle; succinate from succinyl-CoA (ligase route): step 1/1. In terms of biological role, succinyl-CoA synthetase functions in the citric acid cycle (TCA), coupling the hydrolysis of succinyl-CoA to the synthesis of either ATP or GTP and thus represents the only step of substrate-level phosphorylation in the TCA. The beta subunit provides nucleotide specificity of the enzyme and binds the substrate succinate, while the binding sites for coenzyme A and phosphate are found in the alpha subunit. This chain is Succinate--CoA ligase [ADP-forming] subunit beta, found in Vibrio vulnificus (strain CMCP6).